Consider the following 172-residue polypeptide: Crossover junction endodeoxyribonuclease RuvC (172 aa).

Active-site residues include D7, E67, and D140. Residues D7, E67, and D140 each coordinate Mg(2+).

Belongs to the RuvC family. In terms of assembly, homodimer which binds Holliday junction (HJ) DNA. The HJ becomes 2-fold symmetrical on binding to RuvC with unstacked arms; it has a different conformation from HJ DNA in complex with RuvA. In the full resolvosome a probable DNA-RuvA(4)-RuvB(12)-RuvC(2) complex forms which resolves the HJ. Mg(2+) is required as a cofactor.

It is found in the cytoplasm. It carries out the reaction Endonucleolytic cleavage at a junction such as a reciprocal single-stranded crossover between two homologous DNA duplexes (Holliday junction).. In terms of biological role, the RuvA-RuvB-RuvC complex processes Holliday junction (HJ) DNA during genetic recombination and DNA repair. Endonuclease that resolves HJ intermediates. Cleaves cruciform DNA by making single-stranded nicks across the HJ at symmetrical positions within the homologous arms, yielding a 5'-phosphate and a 3'-hydroxyl group; requires a central core of homology in the junction. The consensus cleavage sequence is 5'-(A/T)TT(C/G)-3'. Cleavage occurs on the 3'-side of the TT dinucleotide at the point of strand exchange. HJ branch migration catalyzed by RuvA-RuvB allows RuvC to scan DNA until it finds its consensus sequence, where it cleaves and resolves the cruciform DNA. The polypeptide is Crossover junction endodeoxyribonuclease RuvC (Syntrophomonas wolfei subsp. wolfei (strain DSM 2245B / Goettingen)).